A 159-amino-acid chain; its full sequence is Ribosomal RNA large subunit methyltransferase H (159 aa).

Residues Leu-76, Gly-108, and Phe-127 to Phe-132 contribute to the S-adenosyl-L-methionine site.

The protein belongs to the RNA methyltransferase RlmH family. Homodimer.

The protein resides in the cytoplasm. It carries out the reaction pseudouridine(1915) in 23S rRNA + S-adenosyl-L-methionine = N(3)-methylpseudouridine(1915) in 23S rRNA + S-adenosyl-L-homocysteine + H(+). Its function is as follows. Specifically methylates the pseudouridine at position 1915 (m3Psi1915) in 23S rRNA. This chain is Ribosomal RNA large subunit methyltransferase H, found in Staphylococcus aureus (strain MSSA476).